We begin with the raw amino-acid sequence, 72 residues long: DNA-directed RNA polymerase subunit epsilon (72 aa).

It belongs to the RNA polymerase subunit epsilon family. RNAP is composed of a core of 2 alpha, a beta and a beta' subunit. The core is associated with a delta subunit, and at least one of epsilon or omega. When a sigma factor is associated with the core the holoenzyme is formed, which can initiate transcription.

The catalysed reaction is RNA(n) + a ribonucleoside 5'-triphosphate = RNA(n+1) + diphosphate. Functionally, a non-essential component of RNA polymerase (RNAP). This Staphylococcus haemolyticus (strain JCSC1435) protein is DNA-directed RNA polymerase subunit epsilon.